The primary structure comprises 337 residues: Tryptophan--tRNA ligase (337 aa).

Residues 11–13 (QPT) and 19–20 (GN) contribute to the ATP site. Positions 12 to 20 (PTGNLHLGN) match the 'HIGH' region motif. D135 lines the L-tryptophan pocket. ATP-binding positions include 147–149 (GED), V190, and 199–203 (KMSKS). The short motif at 199–203 (KMSKS) is the 'KMSKS' region element.

It belongs to the class-I aminoacyl-tRNA synthetase family. Homodimer.

Its subcellular location is the cytoplasm. It catalyses the reaction tRNA(Trp) + L-tryptophan + ATP = L-tryptophyl-tRNA(Trp) + AMP + diphosphate + H(+). Catalyzes the attachment of tryptophan to tRNA(Trp). In Synechocystis sp. (strain ATCC 27184 / PCC 6803 / Kazusa), this protein is Tryptophan--tRNA ligase.